Here is a 180-residue protein sequence, read N- to C-terminus: Cytokinin-beta-glucosidase 3 (180 aa).

In terms of biological role, hydrolyzes cytokinin glucosides thus liberating free cytokinins. The protein is Cytokinin-beta-glucosidase 3 (ROLC3) of Panax ginseng (Korean ginseng).